A 156-amino-acid polypeptide reads, in one-letter code: Transcription elongation factor GreA 1 (156 aa).

The stretch at 43-74 (RSENAEYSSAKRDLGRLESRLRYLNKQLQYAQ) forms a coiled coil.

The protein belongs to the GreA/GreB family.

Its function is as follows. Necessary for efficient RNA polymerase transcription elongation past template-encoded arresting sites. The arresting sites in DNA have the property of trapping a certain fraction of elongating RNA polymerases that pass through, resulting in locked ternary complexes. Cleavage of the nascent transcript by cleavage factors such as GreA or GreB allows the resumption of elongation from the new 3'terminus. GreA releases sequences of 2 to 3 nucleotides. This is Transcription elongation factor GreA 1 from Lactiplantibacillus plantarum (strain ATCC BAA-793 / NCIMB 8826 / WCFS1) (Lactobacillus plantarum).